We begin with the raw amino-acid sequence, 361 residues long: MKGLILVGGYGTRLRPLTLTVPKPLVEFCNRPMILHQIEALAAAGVTDIVLAVNYRPEVMVETLKKYEKQYGVSITFSVETEPLGTAGPLKLAEKVLKKDNSPFFVLNSDVICEYPFKELAAFHRAHGGKGTIVATKVDEPSKYGVIVHDIATPNLIDRFVEKPVEFVGNRINAGLYILNPEVIDLIELRPTSIEKETFPILVEQKSLYSFDLEGYWMDVGQPKDFLAGTVLYLNSLSKRHPEQLAKGDNIVGNVIIDPSAKISGSAKLGPDVVIGPNVTIGEGVRITRSVVLSDSTINDHSLVKSTIVGWHSTVGKWCRLEGCSVLGDDVEVKDEVYVNGGKVLPHKSISANVPKEAIIM.

Belongs to the transferase hexapeptide repeat family.

The protein localises to the cytoplasm. It carries out the reaction alpha-D-mannose 1-phosphate + GTP + H(+) = GDP-alpha-D-mannose + diphosphate. It functions in the pathway nucleotide-sugar biosynthesis; GDP-alpha-D-mannose biosynthesis; GDP-alpha-D-mannose from alpha-D-mannose 1-phosphate (GTP route): step 1/1. Its function is as follows. Involved in cell wall synthesis where it is required for glycosylation. Involved in cell cycle progression through cell-size checkpoint. This Eremothecium gossypii (strain ATCC 10895 / CBS 109.51 / FGSC 9923 / NRRL Y-1056) (Yeast) protein is Mannose-1-phosphate guanyltransferase (MPG1).